A 301-amino-acid chain; its full sequence is Tyrosine recombinase XerD (301 aa).

Positions proline 6–lysine 89 constitute a Core-binding (CB) domain. Positions arginine 108–histidine 293 constitute a Tyr recombinase domain. Residues arginine 152, lysine 174, histidine 245, arginine 248, and histidine 271 contribute to the active site. Residue tyrosine 280 is the O-(3'-phospho-DNA)-tyrosine intermediate of the active site.

Belongs to the 'phage' integrase family. XerD subfamily. In terms of assembly, forms a cyclic heterotetrameric complex composed of two molecules of XerC and two molecules of XerD.

The protein resides in the cytoplasm. Functionally, site-specific tyrosine recombinase, which acts by catalyzing the cutting and rejoining of the recombining DNA molecules. The XerC-XerD complex is essential to convert dimers of the bacterial chromosome into monomers to permit their segregation at cell division. It also contributes to the segregational stability of plasmids. In Chlamydia muridarum (strain MoPn / Nigg), this protein is Tyrosine recombinase XerD.